Reading from the N-terminus, the 844-residue chain is Receptor-like protein 49 (844 aa).

A signal peptide spans 1–31 (MMYSCRERRMITVKWSLCLIFCLSNSILVFA). Residues 32–803 (KHLCLPDQRD…QDEEKEEEEQ (772 aa)) are Extracellular-facing. N59, N95, N112, and N159 each carry an N-linked (GlcNAc...) asparagine glycan. LRR repeat units lie at residues 102 to 126 (QHLQ…GLKG), 136 to 160 (LKYL…LGNL), 161 to 183 (SYLT…SMGN), 185 to 208 (NYLR…LGNL), 209 to 231 (SYLA…SMGN), 242 to 265 (LNSL…NMSS), 266 to 290 (LSKL…LFMI), 292 to 313 (SLVE…NISS), 315 to 339 (SKLQ…IFSP), 345 to 362 (YLDV…VSLP), 363 to 385 (SPIE…LRNQ), 386 to 409 (TKLY…LWSL), 410 to 434 (PELQ…VIQG), 436 to 457 (GELY…LLPV), 458 to 481 (DSMN…ICEL), 482 to 504 (DNLV…CFEN), 506 to 527 (HLYV…EAIS), 528 to 551 (DRLQ…LINC), 553 to 574 (ALEF…WLEL), 575 to 601 (LPNF…SLSF), 602 to 625 (PRLR…YFAP), 665 to 689 (FTIY…ISLL), 690 to 713 (KELI…LSNL), 714 to 737 (SNLQ…LGEL), and 739 to 762 (FLAR…QIQT). A glycan (N-linked (GlcNAc...) asparagine) is linked at N207. N-linked (GlcNAc...) asparagine glycosylation occurs at N262. The N-linked (GlcNAc...) asparagine glycan is linked to N310. N-linked (GlcNAc...) asparagine glycosylation is found at N374 and N384. N416 carries an N-linked (GlcNAc...) asparagine glycan. N-linked (GlcNAc...) asparagine glycosylation is found at N493, N516, and N550. Residues N696 and N712 are each glycosylated (N-linked (GlcNAc...) asparagine). N-linked (GlcNAc...) asparagine glycosylation occurs at N744. The chain crosses the membrane as a helical span at residues 804 to 824 (VFSWIAAAIGYVPGVVCGLTI). Over 825–844 (GHILVSHKRDWFMRIVSLFT) the chain is Cytoplasmic.

The protein belongs to the RLP family.

It is found in the cell membrane. The chain is Receptor-like protein 49 from Arabidopsis thaliana (Mouse-ear cress).